The following is a 30-amino-acid chain: Glucagon-like peptide (30 aa).

The residue at position 30 (arginine 30) is an Arginine amide.

The protein belongs to the glucagon family.

It localises to the secreted. This Anguilla anguilla (European freshwater eel) protein is Glucagon-like peptide.